We begin with the raw amino-acid sequence, 286 residues long: uncharacterized protein (286 aa).

In terms of domain architecture, Radical SAM core spans Glu-36–Lys-256. [4Fe-4S] cluster is bound by residues Cys-50, Cys-54, and Cys-57.

[4Fe-4S] cluster serves as cofactor.

This is an uncharacterized protein from Methanocaldococcus jannaschii (strain ATCC 43067 / DSM 2661 / JAL-1 / JCM 10045 / NBRC 100440) (Methanococcus jannaschii).